The following is a 68-amino-acid chain: Large ribosomal subunit protein uL29 (68 aa).

It belongs to the universal ribosomal protein uL29 family.

This Acidiphilium cryptum (strain JF-5) protein is Large ribosomal subunit protein uL29.